Here is a 379-residue protein sequence, read N- to C-terminus: Probable pectin lyase A (379 aa).

Positions 1–20 are cleaved as a signal peptide; sequence MKYSTIFSAAAAVFAGSAAA. 2 disulfide bridges follow: C83–C102 and C92–C226. N129 carries an N-linked (GlcNAc...) asparagine glycan. R256 is an active-site residue. C322 and C330 are oxidised to a cystine.

This sequence belongs to the polysaccharide lyase 1 family.

The protein localises to the secreted. It carries out the reaction Eliminative cleavage of (1-&gt;4)-alpha-D-galacturonan methyl ester to give oligosaccharides with 4-deoxy-6-O-methyl-alpha-D-galact-4-enuronosyl groups at their non-reducing ends.. Pectinolytic enzymes consist of four classes of enzymes: pectin lyase, polygalacturonase, pectin methylesterase and rhamnogalacturonase. Among pectinolytic enzymes, pectin lyase is the most important in depolymerization of pectin, since it cleaves internal glycosidic bonds of highly methylated pectins. The chain is Probable pectin lyase A (pelA) from Aspergillus niger (strain ATCC MYA-4892 / CBS 513.88 / FGSC A1513).